A 495-amino-acid chain; its full sequence is Genome polyprotein (495 aa).

Residues 1 to 445 lie on the Extracellular side of the membrane; sequence MRCIGISNRD…LNQVFGTIYG (445 aa). Intrachain disulfides connect Cys3–Cys30, Cys60–Cys121, Cys74–Cys105, and Cys92–Cys116. Asn67 is a glycosylation site (N-linked (GlcNAc...) asparagine; by host). Positions 98 to 111 are fusion peptide; it reads DRGWGNGCGLFGKG. N-linked (GlcNAc...) asparagine; by host glycosylation occurs at Asn153. 2 disulfides stabilise this stretch: Cys185–Cys285 and Cys302–Cys333. The helical transmembrane segment at 446–466 threads the bilayer; sequence AAFSGVSWTMKILIGVIITCI. Topologically, residues 467–472 are cytoplasmic; sequence GMNSRS. A helical membrane pass occupies residues 473–493; sequence TSLSVSLVLVGVVTLYLGGMV. The Extracellular segment spans residues 494-495; sequence HA.

Homodimer; in the endoplasmic reticulum and Golgi. Interacts with protein prM. Interacts with non-structural protein 1. Post-translationally, N-glycosylated. Specific enzymatic cleavages in vivo yield mature proteins. Cleavages in the lumen of endoplasmic reticulum are performed by host signal peptidase, wereas cleavages in the cytoplasmic side are performed by serine protease NS3. Signal cleavage at the 2K-4B site requires a prior NS3 protease-mediated cleavage at the 4A-2K site.

It is found in the virion membrane. It localises to the host endoplasmic reticulum membrane. In terms of biological role, binds to host cell surface receptor and mediates fusion between viral and cellular membranes. Envelope protein is synthesized in the endoplasmic reticulum in the form of heterodimer with protein prM. They play a role in virion budding in the ER, and the newly formed immature particle is covered with 60 spikes composed of heterodimer between precursor prM and envelope protein E. The virion is transported to the Golgi apparatus where the low pH causes dissociation of PrM-E heterodimers and formation of E homodimers. prM-E cleavage is inefficient, and many virions are only partially matured. These uncleaved prM would play a role in immune evasion. This Aedes aegypti (Yellowfever mosquito) protein is Genome polyprotein.